Here is a 1923-residue protein sequence, read N- to C-terminus: Callose synthase 5 (1923 aa).

The segment covering 1–10 has biased composition (polar residues); the sequence is MAQSSTSHDS. Residues 1–22 form a disordered region; sequence MAQSSTSHDSGPQGLMRRPSRS. Topologically, residues 1–481 are cytoplasmic; sequence MAQSSTSHDS…ETRTFWHIYH (481 aa). A helical membrane pass occupies residues 482–502; that stretch reads SFDRLWTFYLLALQAMIILAF. Topologically, residues 503-521 are extracellular; it reads ERVELREILRKDVLYALSS. A helical transmembrane segment spans residues 522–542; the sequence is IFITAAFLRFLQSVLDVILNF. Residues 543 to 559 are Cytoplasmic-facing; that stretch reads PGFHRWKFTDVLRNILK. A helical membrane pass occupies residues 560–580; that stretch reads IVVSLAWCVVLPLCYAQSVSF. The Extracellular portion of the chain corresponds to 581 to 601; it reads APGKLKQWLSFLPQVKGVPPL. The chain crosses the membrane as a helical span at residues 602 to 622; sequence YIMAVALYLLPNVLAAIMFIF. Residues 623–658 lie on the Cytoplasmic side of the membrane; the sequence is PMLRRWIENSDWHIFRLLLWWSQPRIYVGRGMHESQ. A helical membrane pass occupies residues 659 to 679; it reads IALIKYTIFWLLLFCCKFAFS. Residues 680–719 are Extracellular-facing; sequence YFLQVKLLVKPTNAIMSIRHVKYKWHEFFPNAEHNYGAVV. The helical transmembrane segment at 720-740 threads the bilayer; sequence SLWLPVILVYFMDTQIWYAIF. Residues 741-1486 are Cytoplasmic-facing; it reads STICGGVIGA…FDFFRMMSCY (746 aa). Residues 1487–1507 traverse the membrane as a helical segment; the sequence is FTTVGFYISSMIVVLTVYAFL. Residues 1508-1535 lie on the Extracellular side of the membrane; the sequence is YGRLYLSLSGVEEAIVKFAAAKGDSSLK. Residues 1536-1556 form a helical membrane-spanning segment; it reads AAMASQSVVQLGLLMTLPMVM. Over 1557 to 1566 the chain is Cytoplasmic; sequence EIGLERGFRT. The helical transmembrane segment at 1567–1587 threads the bilayer; that stretch reads ALSDLIIMQLQLAPVFFTFSL. Residues 1588–1630 lie on the Extracellular side of the membrane; it reads GTKVHYYGRTILHGGSKYRATGRGFVVKHEKFAENYRMYSRSH. Residues 1631 to 1651 form a helical membrane-spanning segment; it reads FVKGMELMVLLICYRIYGKAA. Topologically, residues 1652 to 1657 are cytoplasmic; that stretch reads EDSVGY. A helical transmembrane segment spans residues 1658–1678; the sequence is ALVMGSTWFLVGSWLFAPFFF. Residues 1679 to 1732 are Extracellular-facing; that stretch reads NPSGFEWQKIVDDWDDWNKWISSRGGIGVPANKSWESWWEEEQEHLLHSGFFGK. N-linked (GlcNAc...) asparagine glycosylation is present at asparagine 1710. A helical transmembrane segment spans residues 1733 to 1755; sequence FWEIFLSLRYFIYQYGIVYQLNL. Topologically, residues 1756-1766 are cytoplasmic; sequence TKESRMGKQHS. A helical transmembrane segment spans residues 1767–1787; the sequence is IIVYGLSWLVIVAVMIVLKIV. Topologically, residues 1788 to 1803 are extracellular; that stretch reads SMGRKKFSADFQLMFR. Residues 1804–1824 traverse the membrane as a helical segment; that stretch reads LLKLFLFIGSVVIVGMLFHFL. A topological domain (cytoplasmic) is located at residue lysine 1825. Residues 1826–1846 form a helical membrane-spanning segment; sequence LTVGDIMQSLLAFLPTGWALL. Residues 1847–1873 lie on the Extracellular side of the membrane; the sequence is QISQVARPLMKTVGMWGSVKALARGYE. The chain crosses the membrane as a helical span at residues 1874-1894; it reads YIMGVVIFMPVTVLAWFPFVS. The Cytoplasmic portion of the chain corresponds to 1895 to 1923; it reads EFQTRLLFNQAFSRGLQIQRILAGGKKQK.

The protein belongs to the glycosyltransferase 48 family.

The protein resides in the cell membrane. It carries out the reaction [(1-&gt;3)-beta-D-glucosyl](n) + UDP-alpha-D-glucose = [(1-&gt;3)-beta-D-glucosyl](n+1) + UDP + H(+). In terms of biological role, required for the formation of the callose wall separating the tetraspores (interstitial wall) and surrounding the pollen mother cells (peripheral wall). Required for exine formation on pollen wall. May be involved in callose synthesis during pollen tube growth. During plant growth and development, callose is found as a transitory component of the cell plate in dividing cells, is a major component of pollen mother cell walls and pollen tubes, and is found as a structural component of plasmodesmatal canals. This Arabidopsis thaliana (Mouse-ear cress) protein is Callose synthase 5 (CALS5).